Consider the following 451-residue polypeptide: 23S rRNA (uracil(1939)-C(5))-methyltransferase RlmD (451 aa).

A TRAM domain is found at 20 to 78; that stretch reads QIPAGKKQRLTIERLSDDGRGIAFLEGKTWFVAGSLAGEEVEARVLNARGKVVEARTER. [4Fe-4S] cluster-binding residues include C91, C97, C100, and C179. 6 residues coordinate S-adenosyl-L-methionine: Q283, F312, N317, E333, D360, and D381. C407 acts as the Nucleophile in catalysis.

The protein belongs to the class I-like SAM-binding methyltransferase superfamily. RNA M5U methyltransferase family. RlmD subfamily.

The enzyme catalyses uridine(1939) in 23S rRNA + S-adenosyl-L-methionine = 5-methyluridine(1939) in 23S rRNA + S-adenosyl-L-homocysteine + H(+). Catalyzes the formation of 5-methyl-uridine at position 1939 (m5U1939) in 23S rRNA. This Pseudomonas savastanoi pv. phaseolicola (strain 1448A / Race 6) (Pseudomonas syringae pv. phaseolicola (strain 1448A / Race 6)) protein is 23S rRNA (uracil(1939)-C(5))-methyltransferase RlmD.